Here is a 282-residue protein sequence, read N- to C-terminus: MQRLRWLRDWKSSGRGLTAAKEPGARSSPLQAMRILQLILLALATGLVGGETRIIKGFECKPHSQPWQAALFEKTRLLCGATLIAPRWLLTAAHCLKPRYIVHLGQHNLQKEEGCEQTRTATESFPHPGFNNSLPNKDHRNDIMLVKMASPVSITWAVRPLTLSSRCVTAGTSCLISGWGSTSSPQLRLPHTLRCANITIIEHQKCENAYPGNITDTMVCASVQEGGKDSCQGDSGGPLVCNQSLQGIISWGQDPCAITRKPGVYTKVCKYVDWIQETMKNN.

The first 50 residues, 1 to 50, serve as a signal peptide directing secretion; it reads MQRLRWLRDWKSSGRGLTAAKEPGARSSPLQAMRILQLILLALATGLVGG. The propeptide at 51 to 53 is activation peptide; the sequence is ETR. The 228-residue stretch at 53 to 280 folds into the Peptidase S1 domain; the sequence is RIIKGFECKP…YVDWIQETMK (228 aa). 6 disulfides stabilise this stretch: C60/C195, C79/C95, C167/C269, C174/C241, C206/C220, and C231/C256. H94 (charge relay system) is an active-site residue. N131 carries an N-linked (GlcNAc...) asparagine glycan. The active-site Charge relay system is D142. N197 and N213 each carry an N-linked (GlcNAc...) asparagine glycan. S235 (charge relay system) is an active-site residue. N-linked (GlcNAc...) asparagine glycosylation is present at N242.

This sequence belongs to the peptidase S1 family. Kallikrein subfamily. In terms of processing, about 40% of KLK11 is inactivated by internal cleavage after Arg-188. This proteolytic inactivation may be effected by plasminogen. In terms of tissue distribution, expressed in brain, skin and prostate. Isoform 1 is expressed preferentially in brain. Isoform 2 is expressed in prostate. Present in seminal plasma at concentrations ranging from 2 to 37 microg/mL (at protein level).

The protein localises to the secreted. It localises to the golgi apparatus. Functionally, possible multifunctional protease. Efficiently cleaves 'bz-Phe-Arg-4-methylcoumaryl-7-amide', a kallikrein substrate, and weakly cleaves other substrates for kallikrein and trypsin. Cleaves synthetic peptides after arginine but not lysine residues. The protein is Kallikrein-11 (KLK11) of Homo sapiens (Human).